Consider the following 588-residue polypeptide: Thioredoxin domain-containing protein 3 (588 aa).

The 118-residue stretch at 2–119 folds into the Thioredoxin domain; it reads ASKKREVQLQ…VINLIDEERK (118 aa). Residues C39 and C42 are joined by a disulfide bond. NDK stretches follow at residues 157–257, 315–455, and 456–588; these read IAII…DQPE, LEKT…STLG, and LIKP…PEEN. Residues 230 to 261 are disordered; it reads GSKHNPPSEETEPQTDTEPNERSEDQPEVEAQ.

In the C-terminal section; belongs to the NDK family. In terms of assembly, monomer. In terms of tissue distribution, testis-specific. Expressed only in primary spermatocytes and round spermatids.

The protein resides in the cytoplasm. In terms of biological role, probably required during the final stages of sperm tail maturation in the testis and/or epididymis, where extensive disulfide bonding of fibrous sheath (FS) proteins occurs. In vitro, it has neither nucleoside diphosphate kinase (NDPK) activity nor reducing activity on disulfide bonds. Exhibits a 3'-5' exonuclease activity with a preference for single-stranded DNA, suggesting roles in DNA proofreading and repair. The sequence is that of Thioredoxin domain-containing protein 3 from Homo sapiens (Human).